The sequence spans 343 residues: Ribosomal RNA small subunit methyltransferase C (343 aa).

It belongs to the methyltransferase superfamily. RsmC family. Monomer.

It is found in the cytoplasm. The enzyme catalyses guanosine(1207) in 16S rRNA + S-adenosyl-L-methionine = N(2)-methylguanosine(1207) in 16S rRNA + S-adenosyl-L-homocysteine + H(+). Specifically methylates the guanine in position 1207 of 16S rRNA in the 30S particle. This chain is Ribosomal RNA small subunit methyltransferase C, found in Escherichia coli O8 (strain IAI1).